Reading from the N-terminus, the 215-residue chain is Probable phosphoglycerate mutase GpmB (215 aa).

Residues 8 to 15 (RHGETQWN), 21 to 22 (QG), Arg-58, Lys-60, 82 to 85 (ELDM), 104 to 105 (RR), and 151 to 152 (GI) contribute to the substrate site. The active-site Tele-phosphohistidine intermediate is His-9. Glu-82 serves as the catalytic Proton donor/acceptor.

This sequence belongs to the phosphoglycerate mutase family. GpmB subfamily.

It carries out the reaction (2R)-2-phosphoglycerate = (2R)-3-phosphoglycerate. It participates in carbohydrate degradation; glycolysis; pyruvate from D-glyceraldehyde 3-phosphate: step 3/5. This chain is Probable phosphoglycerate mutase GpmB, found in Salmonella paratyphi A (strain AKU_12601).